The sequence spans 352 residues: Dysbindin (352 aa).

At Ser-11 the chain carries Phosphoserine. The stretch at 88-176 (EKKRTSLNEL…EAFKAELDTE (89 aa)) forms a coiled coil. Residues 173 to 325 (LDTEHTQKAL…DEEEVQVDTA (153 aa)) form a dysbindin region. A Nuclear export signal motif is present at residues 243 to 256 (LMDISDQEALDVFL). The interval 267–352 (SPGVEMESNP…SDQCDSTQDI (86 aa)) is disordered. Positions 274–285 (SNPNQNEMSLQI) are enriched in polar residues. Residues 286–301 (PSPSESASQPPASPSA) show a composition bias toward low complexity. Phosphoserine is present on residues Ser-315, Ser-340, and Ser-343.

Belongs to the dysbindin family. Interacts with AP3M1 and TRIM32. Interacts (isoform 1 and isoform 2 only) with the DNA-dependent protein kinase complex DNA-PK; the interaction phosphorylates DTNBP1 in vitro. Interacts directly in this complex with XRCC5 and XRCC6. Interacts with XPO1; the interaction exports DTNBP1 out of the nucleus. Component of the biogenesis of lysosome-related organelles complex 1 (BLOC-1) composed of BLOC1S1, BLOC1S2, BLOC1S3, BLOC1S4, BLOC1S5, BLOC1S6, DTNBP1/BLOC1S7 and SNAPIN/BLOC1S8. The BLOC-1 complex associates with the AP-3 protein complex and membrane protein cargos. This BLOC-1 complex also associates with the BLOC-2 complex in endosomes. Binds to DTNA and DTNB but may not be a physiological binding partner. Interacts (via its coiled coil domain) with KXD1. Interacts with AP3B2, BLOC1S5, BLOC1S6, CMYA5, PI4K2, RNF151 and SNAPIN/BLOC1S8. Interacts with XPO1; the interaction exports DTNBP1 out of the nucleus. In terms of processing, ubiquitinated by TRIM32. Ubiquitination leads to DTNBP1 degradation. Detected in brain, in hippocampus and dentate gyrus neurons. Detected at axon bundles and axon terminals, notably in the cerebellum and hippocampus. Detected in neuropil in hippocampus, lateral septum, basal ganglia and substantia nigra. Highly expressed in pyramidal cells of hippocampus CA2 and CA3. Detected at the heart and skeletal muscle sarcolemma (at protein level). Ubiquitously expressed. The highest expression is observed in testis, liver, kidney, brain, heart and lung. Expressed at lower levels in stomach and small intestine.

The protein localises to the cytoplasm. It localises to the cytoplasmic vesicle membrane. It is found in the endosome membrane. Its subcellular location is the melanosome membrane. The protein resides in the postsynaptic density. The protein localises to the endoplasmic reticulum. It localises to the nucleus. It is found in the cytoplasmic vesicle. Its subcellular location is the secretory vesicle. The protein resides in the synaptic vesicle membrane. The protein localises to the postsynaptic cell membrane. Its function is as follows. Component of the BLOC-1 complex, a complex that is required for normal biogenesis of lysosome-related organelles (LRO), such as platelet dense granules and melanosomes. In concert with the AP-3 complex, the BLOC-1 complex is required to target membrane protein cargos into vesicles assembled at cell bodies for delivery into neurites and nerve terminals. The BLOC-1 complex, in association with SNARE proteins, is also proposed to be involved in neurite extension. Associates with the BLOC-2 complex to facilitate the transport of TYRP1 independent of AP-3 function. Plays a role in synaptic vesicle trafficking and in neurotransmitter release. Plays a role in the regulation of cell surface exposure of DRD2. May play a role in actin cytoskeleton reorganization and neurite outgrowth. May modulate MAPK8 phosphorylation. Appears to promote neuronal transmission and viability through regulating the expression of SNAP25 and SYN1, modulating PI3-kinase-Akt signaling and influencing glutamatergic release. Regulates the expression of SYN1 through binding to its promoter. Modulates prefrontal cortical activity via the dopamine/D2 pathway. This is Dysbindin (Dtnbp1) from Mus musculus (Mouse).